The chain runs to 954 residues: Protein translocase subunit SecA (954 aa).

ATP-binding positions include Gln-86, Gly-104–Thr-108, and Asp-494. The segment at Leu-520–Lys-549 is disordered.

This sequence belongs to the SecA family. As to quaternary structure, monomer and homodimer. Part of the essential Sec protein translocation apparatus which comprises SecA, SecYEG and auxiliary proteins SecDF. Other proteins may also be involved.

The protein localises to the cell inner membrane. It is found in the cellular thylakoid membrane. Its subcellular location is the cytoplasm. The enzyme catalyses ATP + H2O + cellular proteinSide 1 = ADP + phosphate + cellular proteinSide 2.. In terms of biological role, part of the Sec protein translocase complex. Interacts with the SecYEG preprotein conducting channel. Has a central role in coupling the hydrolysis of ATP to the transfer of proteins into and across the cell membrane, serving as an ATP-driven molecular motor driving the stepwise translocation of polypeptide chains across the membrane. Functionally, probably participates in protein translocation into and across both the cytoplasmic and thylakoid membranes in cyanobacterial cells. This is Protein translocase subunit SecA from Synechococcus sp. (strain JA-3-3Ab) (Cyanobacteria bacterium Yellowstone A-Prime).